A 765-amino-acid polypeptide reads, in one-letter code: Beta-glucosidase cel3A (765 aa).

The first 24 residues, M1–A24, serve as a signal peptide directing secretion. 10 N-linked (GlcNAc...) asparagine glycosylation sites follow: N66, N124, N250, N304, N311, N349, N549, N588, N657, and N681.

Belongs to the glycosyl hydrolase 3 family.

The protein resides in the secreted. It catalyses the reaction Hydrolysis of terminal, non-reducing beta-D-glucosyl residues with release of beta-D-glucose.. The protein operates within glycan metabolism; cellulose degradation. In terms of biological role, beta-glucosidases are one of a number of cellulolytic enzymes involved in the degradation of cellulosic biomass. Catalyzes the last step releasing glucose from the inhibitory cellobiose. Shows higher activities on cellobiose and cellotriose but lower activities on laminarioligosaccharides and polymers. The sequence is that of Beta-glucosidase cel3A from Pyricularia oryzae (strain 70-15 / ATCC MYA-4617 / FGSC 8958) (Rice blast fungus).